Consider the following 333-residue polypeptide: Dihydroorotate dehydrogenase (quinone) (333 aa).

Residues 56-60 (AGLDK) and Thr80 contribute to the FMN site. Lys60 serves as a coordination point for substrate. 105–109 (NRMGF) contributes to the substrate binding site. FMN is bound by residues Asn133 and Asn166. Asn166 contributes to the substrate binding site. Ser169 (nucleophile) is an active-site residue. Asn171 contributes to the substrate binding site. FMN-binding residues include Lys211 and Thr239. Position 240–241 (240–241 (NT)) interacts with substrate. FMN is bound by residues Gly262, Gly291, and 312–313 (YS).

This sequence belongs to the dihydroorotate dehydrogenase family. Type 2 subfamily. As to quaternary structure, monomer. FMN is required as a cofactor.

It is found in the cell membrane. It catalyses the reaction (S)-dihydroorotate + a quinone = orotate + a quinol. It functions in the pathway pyrimidine metabolism; UMP biosynthesis via de novo pathway; orotate from (S)-dihydroorotate (quinone route): step 1/1. Catalyzes the conversion of dihydroorotate to orotate with quinone as electron acceptor. This chain is Dihydroorotate dehydrogenase (quinone), found in Legionella pneumophila (strain Lens).